The primary structure comprises 342 residues: Phosphoribosylformylglycinamidine cyclo-ligase (342 aa).

The protein belongs to the AIR synthase family.

The protein resides in the cytoplasm. It carries out the reaction 2-formamido-N(1)-(5-O-phospho-beta-D-ribosyl)acetamidine + ATP = 5-amino-1-(5-phospho-beta-D-ribosyl)imidazole + ADP + phosphate + H(+). The protein operates within purine metabolism; IMP biosynthesis via de novo pathway; 5-amino-1-(5-phospho-D-ribosyl)imidazole from N(2)-formyl-N(1)-(5-phospho-D-ribosyl)glycinamide: step 2/2. This is Phosphoribosylformylglycinamidine cyclo-ligase from Staphylococcus aureus (strain MSSA476).